The primary structure comprises 530 residues: Potassium voltage-gated channel subfamily A member 6 (530 aa).

Residues 1–35 (MRSEKSLTLAAPGEVRGPEGEQQDAGEFQEAEGGG) are disordered. Phosphoserine is present on Ser3. Over residues 21–30 (EQQDAGEFQE) the composition is skewed to acidic residues. The helical transmembrane segment at 172–193 (PARGIAIVSVLVILISIVIFCL) threads the bilayer. The tract at residues 203-239 (GRGGSNEGSGTRMSPASRGSHEEEDEDEDSYAFPGSI) is disordered. The residue at position 222 (Ser222) is a Phosphoserine; by CK2. The chain crosses the membrane as a helical span at residues 264–285 (FFLVETLCIVWFTFELLVRFSA). Cys286 carries the S-palmitoyl cysteine lipid modification. Residues 297–317 (MNIIDLVAIFPYFITLGTELV) form a helical membrane-spanning segment. The chain crosses the membrane as a helical; Voltage-sensor span at residues 339 to 359 (LAILRVIRLVRVFRIFKLSRH). The segment at 361 to 374 (KGLQILGKTLQASM) is S4-S5 linker. Residues 375–396 (RELGLLIFFLFIGVILFSSAVY) form a helical membrane-spanning segment. Residues 411–422 (PDAFWWAVVTMT) constitute an intramembrane region (helical). The short motif at 423–428 (TVGYGD) is the Selectivity filter element. The stretch at 423-430 (TVGYGDMY) is an intramembrane region. Residues 438 to 466 (IVGSLCAIAGVLTIALPVPVIVSNFNYFY) traverse the membrane as a helical segment. Ser512 carries the post-translational modification Phosphoserine; by PKA. Residues 527 to 529 (LTE) carry the PDZ-binding motif. Phosphothreonine; by PKA is present on Thr528.

It belongs to the potassium channel family. A (Shaker) (TC 1.A.1.2) subfamily. Kv1.6/KCNA6 sub-subfamily. Homotetramer and heterotetramer of potassium channel proteins. Interacts with KCNAB1 and KCNAB2.

The protein localises to the cell membrane. The catalysed reaction is K(+)(in) = K(+)(out). Voltage-gated potassium channel that mediates transmembrane potassium transport in excitable membranes. Forms tetrameric potassium-selective channels through which potassium ions pass in accordance with their electrochemical gradient. The channel alternates between opened and closed conformations in response to the voltage difference across the membrane. Can form functional homotetrameric channels and heterotetrameric channels that contain variable proportions of KCNA1, KCNA2, KCNA4, KNCA5, KCNA6, and possibly other family members as well; channel properties depend on the type of alpha subunits that are part of the channel. Channel properties are modulated by cytoplasmic beta subunits that regulate the subcellular location of the alpha subunits and promote rapid inactivation. Homotetrameric channels display rapid activation and slow inactivation. The chain is Potassium voltage-gated channel subfamily A member 6 (Kcna6) from Rattus norvegicus (Rat).